Here is a 355-residue protein sequence, read N- to C-terminus: DNA-binding protein RHL1 (355 aa).

Disordered stretches follow at residues 1-26 (MVRASSSKKGGSKGGDKDDAESKQRK), 181-215 (DFQGGAGGAASVKKLASPEIGSQPTETDSPEVDNE), and 229-355 (IQVT…SSKA). Residues 14 to 23 (GGDKDDAESK) show a composition bias toward basic and acidic residues. Low complexity-rich tracts occupy residues 230 to 246 (QVTPPVQLTPPVQVTPV) and 260 to 274 (AETSSEASSGESEGN). Basic and acidic residues-rich tracts occupy residues 281 to 296 (KPLLEPESSTRSREES) and 309 to 326 (LPEELPAKREKLKSKDSK). The span at 344–355 (AGTSKAKSSSKA) shows a compositional bias: low complexity.

Interacts with BIN4 and TOP6A, but not with TOP6B. As to expression, expressed inproliferating and endoreduplicating cells.

The protein localises to the nucleus. In terms of biological role, component of the DNA topoisomerase VI complex involved in chromatin organization and progression of endoreduplication cycles. Binds to DNA. Required for endoreduplication beyond 8C. The polypeptide is DNA-binding protein RHL1 (RHL1) (Arabidopsis thaliana (Mouse-ear cress)).